The sequence spans 397 residues: MNENIAEKFRADGVARPNWSAVFAVAFCVACLITVEFLPVSLLTPMAQDLGISEGIAGQSVTVTAFVAMFSSLFITQIIQATDRRYIVILFAVLLTASCLMVSFANSFTLLLLGRACLGLALGGFWAMSASLTMRLVPARTVPKALSVIFGAVSIALVIAAPLGSFLGGIIGWRNVFNAAAVMGVLCVIWVVKSLPSLPGEPSHQKQNMFSLLQRPGVMAGMIAIFMSFAGQFAFFTYIRPVYMNLAGFDVDGLTLVLLSFGIASFVGTSFSSYVLKRSVKLALAGAPLLLALSALTLIVWGSDKTVAAVIAIIWGLAFALVPVGWSTWITRSLADQAEKAGSIQVAVIQLANTCGAAVGGYALDNFGLLSPLALSGCLMLLTALVVAAKVRITPMS.

Residues 1 to 21 (MNENIAEKFRADGVARPNWSA) lie on the Cytoplasmic side of the membrane. The chain crosses the membrane as a helical span at residues 22 to 42 (VFAVAFCVACLITVEFLPVSL). Residues 43-54 (LTPMAQDLGISE) are Periplasmic-facing. The chain crosses the membrane as a helical span at residues 55–75 (GIAGQSVTVTAFVAMFSSLFI). At 76 to 85 (TQIIQATDRR) the chain is on the cytoplasmic side. Residues 86–106 (YIVILFAVLLTASCLMVSFAN) form a helical membrane-spanning segment. Serine 107 is a topological domain (periplasmic). The helical transmembrane segment at 108-128 (FTLLLLGRACLGLALGGFWAM) threads the bilayer. Over 129 to 147 (SASLTMRLVPARTVPKALS) the chain is Cytoplasmic. The chain crosses the membrane as a helical span at residues 148 to 168 (VIFGAVSIALVIAAPLGSFLG). At 169–175 (GIIGWRN) the chain is on the periplasmic side. The chain crosses the membrane as a helical span at residues 176-196 (VFNAAAVMGVLCVIWVVKSLP). Topologically, residues 197 to 215 (SLPGEPSHQKQNMFSLLQR) are cytoplasmic. A helical membrane pass occupies residues 216-236 (PGVMAGMIAIFMSFAGQFAFF). The Periplasmic segment spans residues 237 to 255 (TYIRPVYMNLAGFDVDGLT). The chain crosses the membrane as a helical span at residues 256 to 276 (LVLLSFGIASFVGTSFSSYVL). The Cytoplasmic segment spans residues 277 to 281 (KRSVK). Residues 282–302 (LALAGAPLLLALSALTLIVWG) form a helical membrane-spanning segment. The Periplasmic portion of the chain corresponds to 303 to 305 (SDK). The helical transmembrane segment at 306 to 326 (TVAAVIAIIWGLAFALVPVGW) threads the bilayer. The Cytoplasmic segment spans residues 327-343 (STWITRSLADQAEKAGS). Residues 344–364 (IQVAVIQLANTCGAAVGGYAL) traverse the membrane as a helical segment. At 365–366 (DN) the chain is on the periplasmic side. Residues 367-387 (FGLLSPLALSGCLMLLTALVV) traverse the membrane as a helical segment. The Cytoplasmic segment spans residues 388 to 397 (AAKVRITPMS).

It belongs to the major facilitator superfamily. DHA1 family. NepI (TC 2.A.1.2.26) subfamily.

Its subcellular location is the cell inner membrane. The enzyme catalyses inosine(in) + H(+)(out) = inosine(out) + H(+)(in). It carries out the reaction guanosine(in) + H(+)(out) = guanosine(out) + H(+)(in). Functionally, involved in the efflux of purine ribonucleosides, such as inosine and guanosine. This chain is Purine ribonucleoside efflux pump NepI, found in Salmonella enteritidis PT4 (strain P125109).